A 188-amino-acid chain; its full sequence is dCTP deaminase (188 aa).

DCTP contacts are provided by residues 111–116, 135–137, Gln-156, Tyr-170, Lys-179, and Gln-180; these read KSTYAR and TLE. Glu-137 serves as the catalytic Proton donor/acceptor.

It belongs to the dCTP deaminase family. In terms of assembly, homotrimer.

It carries out the reaction dCTP + H2O + H(+) = dUTP + NH4(+). Its pathway is pyrimidine metabolism; dUMP biosynthesis; dUMP from dCTP (dUTP route): step 1/2. In terms of biological role, catalyzes the deamination of dCTP to dUTP. This chain is dCTP deaminase, found in Rickettsia bellii (strain OSU 85-389).